The primary structure comprises 441 residues: Transcription factor TOXE (441 aa).

A basic DNA-binding region region spans residues 14–40 (TDINERRKLQNRVAQRKYRTRQKTRMK). The tract at residues 209–243 (FEPNDQRKTENLPREPCGSCPSSSHGYSPTSGNPS) is disordered. The segment covering 212 to 221 (NDQRKTENLP) has biased composition (basic and acidic residues). Residues 228–241 (CPSSSHGYSPTSGN) are compositionally biased toward polar residues. ANK repeat units follow at residues 289 to 318 (DQFSPLMTAISLGRLDIARILLQSGAPLDI), 322 to 351 (SGKTALHRAVGRRELHMVEALLNLGAEMLA), 355 to 384 (EGNSLLHIAVKTNSLSITRLLLERYKSCRE), and 413 to 440 (EGMTAVHLSVIFNRPEILQLLVKYSANV).

This sequence belongs to the bZIP family. In terms of assembly, monomer.

The protein resides in the nucleus. Transcription factor, part of the diffuse TOX2 gene cluster that mediates the biosynthesis of the HC-toxin, cyclic tetrapeptide of structure cyclo(D-Pro-L-Ala-D-Ala-L-Aeo), where Aeo stands for 2-amino-9,10-epoxi-8-oxodecanoic acid. HC-toxin is a determinant of specificity and virulence in the interaction between the producing fungus and its host, maize. TOXE is a pathway-specific transcription factor which coordinates the expression of genes involved in HC-toxin biosynthesis. Binds to the tox-box, a 10-bp motif with the consensus 5'-ATCTCNCGNA-3', which is found in the promoter of all genes involved in HC-toxin biosynthesis. Required for pathogenicity of the fungus on maize. The sequence is that of Transcription factor TOXE from Cochliobolus carbonum (Maize leaf spot fungus).